The primary structure comprises 99 residues: Large ribosomal subunit protein bL21 (99 aa).

The protein belongs to the bacterial ribosomal protein bL21 family. In terms of assembly, part of the 50S ribosomal subunit. Contacts protein L20.

This protein binds to 23S rRNA in the presence of protein L20. This chain is Large ribosomal subunit protein bL21, found in Neorickettsia sennetsu (strain ATCC VR-367 / Miyayama) (Ehrlichia sennetsu).